Consider the following 51-residue polypeptide: Ovomucoid (51 aa).

Positions 3–51 (VDCSGYPKPACTLEYFPLCGSDNQTYANKCTFCNAVVEKNVTLNHLGEC) constitute a Kazal-like domain. 3 disulfide bridges follow: Cys-5–Cys-35, Cys-13–Cys-32, and Cys-21–Cys-51. N-linked (GlcNAc...) asparagine glycosylation is present at Asn-42.

It localises to the secreted. This is Ovomucoid from Nothoprocta perdicaria (Chilean tinamou).